Here is a 336-residue protein sequence, read N- to C-terminus: Ornithine carbamoyltransferase, catabolic (336 aa).

Carbamoyl phosphate contacts are provided by residues 62 to 65 (STRT), glutamine 89, arginine 113, and 140 to 143 (HPTQ). L-ornithine contacts are provided by residues asparagine 172, aspartate 236, and 240–241 (SM). Carbamoyl phosphate-binding positions include 277–278 (CL) and arginine 322.

This sequence belongs to the aspartate/ornithine carbamoyltransferase superfamily. OTCase family.

It is found in the cytoplasm. The catalysed reaction is carbamoyl phosphate + L-ornithine = L-citrulline + phosphate + H(+). Its pathway is amino-acid degradation; L-arginine degradation via ADI pathway; carbamoyl phosphate from L-arginine: step 2/2. Functionally, reversibly catalyzes the transfer of the carbamoyl group from carbamoyl phosphate (CP) to the N(epsilon) atom of ornithine (ORN) to produce L-citrulline. The polypeptide is Ornithine carbamoyltransferase, catabolic (arcB) (Staphylococcus aureus (strain N315)).